Consider the following 348-residue polypeptide: Dihydroorotase (348 aa).

Residues histidine 14 and histidine 16 each contribute to the Zn(2+) site. Residues 16 to 18 (HLR) and asparagine 42 each bind substrate. 3 residues coordinate Zn(2+): lysine 100, histidine 137, and histidine 175. Lysine 100 is modified (N6-carboxylysine). Histidine 137 lines the substrate pocket. Leucine 220 contacts substrate. Position 248 (aspartate 248) interacts with Zn(2+). Aspartate 248 is an active-site residue. Substrate contacts are provided by histidine 252 and alanine 264.

This sequence belongs to the metallo-dependent hydrolases superfamily. DHOase family. Class II DHOase subfamily. In terms of assembly, homodimer. Zn(2+) serves as cofactor.

The catalysed reaction is (S)-dihydroorotate + H2O = N-carbamoyl-L-aspartate + H(+). It participates in pyrimidine metabolism; UMP biosynthesis via de novo pathway; (S)-dihydroorotate from bicarbonate: step 3/3. Its function is as follows. Catalyzes the reversible cyclization of carbamoyl aspartate to dihydroorotate. The protein is Dihydroorotase of Pseudomonas aeruginosa (strain UCBPP-PA14).